The chain runs to 122 residues: Large ribosomal subunit protein uL14 (122 aa).

The protein belongs to the universal ribosomal protein uL14 family. In terms of assembly, part of the 50S ribosomal subunit. Forms a cluster with proteins L3 and L19. In the 70S ribosome, L14 and L19 interact and together make contacts with the 16S rRNA in bridges B5 and B8.

In terms of biological role, binds to 23S rRNA. Forms part of two intersubunit bridges in the 70S ribosome. The polypeptide is Large ribosomal subunit protein uL14 (Desulfosudis oleivorans (strain DSM 6200 / JCM 39069 / Hxd3) (Desulfococcus oleovorans)).